The sequence spans 461 residues: tRNA modification GTPase MnmE (461 aa).

Residues R20, E85, and K124 each contribute to the (6S)-5-formyl-5,6,7,8-tetrahydrofolate site. The region spanning 221-383 (GIPVAIIGET…LQQLLTEVSS (163 aa)) is the TrmE-type G domain. N231 is a K(+) binding site. GTP contacts are provided by residues 231–236 (NAGKST), 250–256 (SDIHGTT), and 275–278 (DTAG). S235 lines the Mg(2+) pocket. S250, I252, and T255 together coordinate K(+). A Mg(2+)-binding site is contributed by T256. Residue K461 coordinates (6S)-5-formyl-5,6,7,8-tetrahydrofolate.

The protein belongs to the TRAFAC class TrmE-Era-EngA-EngB-Septin-like GTPase superfamily. TrmE GTPase family. In terms of assembly, homodimer. Heterotetramer of two MnmE and two MnmG subunits. Requires K(+) as cofactor.

The protein resides in the cytoplasm. Exhibits a very high intrinsic GTPase hydrolysis rate. Involved in the addition of a carboxymethylaminomethyl (cmnm) group at the wobble position (U34) of certain tRNAs, forming tRNA-cmnm(5)s(2)U34. The protein is tRNA modification GTPase MnmE of Parabacteroides distasonis (strain ATCC 8503 / DSM 20701 / CIP 104284 / JCM 5825 / NCTC 11152).